The primary structure comprises 450 residues: Neutral protease 2 homolog AFUB_070680 (450 aa).

Positions 1–19 (MKITALASAILAVAQGALA) are cleaved as a signal peptide. The propeptide occupies 20 to 172 (LPARAPALDI…PASIKPLDRR (153 aa)). 2 disulfides stabilise this stretch: Cys179–Cys251 and Cys258–Cys276. Position 300 (His300) interacts with Zn(2+). Glu301 is a catalytic residue. Zn(2+) is bound by residues His304 and Asp315. Over residues 364–392 (QPGQTEPGTQTMWDGYSQPGQTEPGTQTM) the composition is skewed to polar residues. The tract at residues 364–416 (QPGQTEPGTQTMWDGYSQPGQTEPGTQTMWDGYSQPGQTEPGTQTTWDGYSQP) is disordered. Low complexity predominate over residues 398-409 (QPGQTEPGTQTT).

Belongs to the peptidase M35 family. It depends on Zn(2+) as a cofactor.

The protein localises to the secreted. The enzyme catalyses Preferential cleavage of bonds with hydrophobic residues in P1'. Also 3-Asn-|-Gln-4 and 8-Gly-|-Ser-9 bonds in insulin B chain.. Its function is as follows. Secreted metalloproteinase that allows assimilation of proteinaceous substrates. Shows high activities on basic nuclear substrates such as histone and protamine. May be involved in virulence. The sequence is that of Neutral protease 2 homolog AFUB_070680 from Aspergillus fumigatus (strain ATCC MYA-4609 / CBS 101355 / FGSC A1100 / Af293) (Neosartorya fumigata).